Reading from the N-terminus, the 38-residue chain is Large ribosomal subunit protein bL36 (38 aa).

The protein belongs to the bacterial ribosomal protein bL36 family.

The chain is Large ribosomal subunit protein bL36 from Prosthecochloris aestuarii (strain DSM 271 / SK 413).